We begin with the raw amino-acid sequence, 1003 residues long: Glutamate receptor ionotropic, NMDA 3B (1003 aa).

The N-terminal stretch at 1–24 (MECVQTLWLSLALALARGSWVVRG) is a signal peptide. Residues 25–574 (HPQPCGVPTR…PIGAFMWPLH (550 aa)) are Extracellular-facing. 5 N-linked (GlcNAc...) asparagine glycosylation sites follow: asparagine 69, asparagine 212, asparagine 344, asparagine 451, and asparagine 465. 2 disulfides stabilise this stretch: cysteine 439-cysteine 475 and cysteine 445-cysteine 476. Glycine contacts are provided by serine 531, serine 533, and arginine 538. Serine 533 and arginine 538 together coordinate D-serine. Residues 575-594 (WSMWVGVFAALHLTALFLTL) form a helical membrane-spanning segment. The Cytoplasmic segment spans residues 595 to 615 (YEWRSPYGLTPRGRNRGTVFS). Residues 616–627 (YSSALNLCYAIL) constitute an intramembrane region (discontinuously helical). Residues 628-641 (FGRTVSSKTPKCPT) lie on the Cytoplasmic side of the membrane. The chain crosses the membrane as a helical span at residues 642–661 (GRFLMNLWAIFCLLVLSSYT). The Extracellular portion of the chain corresponds to 662-832 (ANLAAVMVGD…TLQMGVYHLS (171 aa)). Serine 701 lines the glycine pocket. Residues serine 701, alanine 702, and aspartate 745 each contribute to the D-serine site. Aspartate 745 contributes to the glycine binding site. Asparagine 786 is a glycosylation site (N-linked (GlcNAc...) asparagine). The helical transmembrane segment at 833–848 (GLFVLLCLGLGSALLT) threads the bilayer. At 849 to 1003 (SLGEHVFYRL…RLLHAAPAES (155 aa)) the chain is on the cytoplasmic side. Residues 883 to 912 (LNTGPPEGQQERAEQECSGPKEEQPAADGA) are disordered. Basic and acidic residues predominate over residues 891 to 906 (QQERAEQECSGPKEEQ). Residues 947-986 (SNGPGVQAELRELELRIEAARERLRSALLRRGELRAQLGD) are a coiled coil. Positions 952–985 (VQAELRELELRIEAARERLRSALLRRGELRAQLG) are involved in the trafficking and surface expression of NMDARs.

The protein belongs to the glutamate-gated ion channel (TC 1.A.10.1) family. NR3B/GRIN3B subfamily. In terms of assembly, forms heterotetrameric channels that contain at least two GluN1 subunits and at least a combination of one GluN2 and one GluN3 subunits (in vitro). Forms heterotetrameric channels composed of two GluN1/zeta subunits (GRIN1), and two identical GluN3 subunits (GRIN3A or GRIN3B) (in vitro). Does not form functional homomeric channels. Expressed in the facial nucleus and the ambiguus nucleus of the brainstem, pons, medulla, spinal cord and cerebellum.

The protein resides in the cell membrane. It localises to the postsynaptic cell membrane. The catalysed reaction is Ca(2+)(in) = Ca(2+)(out). It carries out the reaction Na(+)(in) = Na(+)(out). Component of a non-conventional N-methyl-D-aspartate (NMDA) receptors (NMDARs) that function as heterotetrameric, ligand-gated cation channels with low calcium permeability and low voltage-dependent block by Mg(2+). Forms glutamatergic receptor complexes with GluN1 and GluN2 subunits which are activated by glycine binding to the GluN1 and GluN3 subunits and L-glutamate binding to GluN2 subunits. Forms excitatory glycinergic receptor complexes with GluN1 alone which are activated by glycine binding to the GluN1 and GluN3 subunits. GluN3B subunit also binds D-serine and, in the absence of glycine, activates glycinergic receptor complexes, but with lower efficacy than glycine. Each GluN3 subunit confers differential attributes to channel properties, including activation, deactivation and desensitization kinetics, pH sensitivity, Ca2(+) permeability, and binding to allosteric modulators. The chain is Glutamate receptor ionotropic, NMDA 3B from Mus musculus (Mouse).